A 674-amino-acid chain; its full sequence is DNA ligase (674 aa).

NAD(+) is bound by residues 42-46, 91-92, and glutamate 121; these read DNVYD and SM. Residue lysine 123 is the N6-AMP-lysine intermediate of the active site. NAD(+)-binding residues include arginine 144, glutamate 178, lysine 294, and lysine 318. The Zn(2+) site is built by cysteine 412, cysteine 415, cysteine 430, and cysteine 435. Residues 596–674 enclose the BRCT domain; the sequence is VKDSFVAGKT…ETELLANLKD (79 aa).

The protein belongs to the NAD-dependent DNA ligase family. LigA subfamily. Mg(2+) is required as a cofactor. Mn(2+) serves as cofactor.

It catalyses the reaction NAD(+) + (deoxyribonucleotide)n-3'-hydroxyl + 5'-phospho-(deoxyribonucleotide)m = (deoxyribonucleotide)n+m + AMP + beta-nicotinamide D-nucleotide.. DNA ligase that catalyzes the formation of phosphodiester linkages between 5'-phosphoryl and 3'-hydroxyl groups in double-stranded DNA using NAD as a coenzyme and as the energy source for the reaction. It is essential for DNA replication and repair of damaged DNA. The polypeptide is DNA ligase (Lacticaseibacillus casei (strain BL23) (Lactobacillus casei)).